The chain runs to 41 residues: Pi-stichotoxin-Hmg5c (41 aa).

3 disulfide bridges follow: Cys4–Cys37, Cys6–Cys30, and Cys20–Cys38.

Belongs to the sea anemone type 3 (BDS) potassium channel toxin family.

It localises to the secreted. Its subcellular location is the nematocyst. In terms of biological role, toxin with different activities on acid-sensing ion channels (ASIC) and nicotinic acetylcholine receptors. Is able to bind T.californica muscle-type nicotinic acetylcholine receptors (nAChR) (alpha-1-beta-1-delta-epsilon (CHRNA1-CHRNB1-CHRND-CHRNE)), and human alpha-7/CHRNA7 nicotinic acetylcholine receptors. Weakly and reversibly inhibits rat homomeric ASIC1 (isoform ASIC1a) (IC(50)=1.25 uM), while it potentiates rat homomeric ASIC3 (EC(50)=1.53 uM). Rat ASIC1a current inhibition is not complete, and reaches a maximum of 86% inhibition. On rat ASIC3, does not activate the channel itself, but produces a remarkable potentiation of the transient current resulting from the acidic pulse. At the maximal applied concentration, elicits responses that are twice as high as those produced by extracellular protons. Surprisingly, shows a different activity on human ASIC3. On the truncated human ASIC3 (ASIC3-D20), the toxin weakly inhibits the channel. Molecular modeling interaction with rat ASIC1a suggests that it hinders the collapse of acidic pockets and stabilizes nonconducting channels state. In vivo, causes an anxiolytic effect on mouse behavior. Also shows an analgesic activity in an acid-induced muscle pain model, and important anti-inflammatory effect in models of acute local inflammation. This chain is Pi-stichotoxin-Hmg5c, found in Heteractis magnifica (Magnificent sea anemone).